The following is a 374-amino-acid chain: MPLLISPFAELDLIRQPEQQDEPLQAFDAADEYLLNHVAQAGLSLPSRVLVLNDSFGALAASLAPHATVISSTDSFLAAQALEKNLARNGMSYDAVPHIPASEALQGPFDWVLIRVPKTLALLEEQLIRLQGQLAPGARVIAAAMVKHLPRSAGDLLEEYVGPVQASLAVKKARLLFATPQPMEVRTSPYPTRYRLEEPAIELLNHANVFCRDGLDIGTRAFLPHLPKNLGTARVADLGCGNGVLAIASALDNPQAHYTLVDESFMAVKSAAENWRATLGDRDVRVRAGDGLEMQEPDSLDVVLCNPPFHQQQVVGDFLAWRMFLQARAALVTGGALYIVGNRHLGYHTKLSRLFRGVEQVAATPKFVILKARK.

It belongs to the methyltransferase superfamily. RlmG family.

The protein resides in the cytoplasm. It catalyses the reaction guanosine(1835) in 23S rRNA + S-adenosyl-L-methionine = N(2)-methylguanosine(1835) in 23S rRNA + S-adenosyl-L-homocysteine + H(+). Specifically methylates the guanine in position 1835 (m2G1835) of 23S rRNA. In Pseudomonas syringae pv. syringae (strain B728a), this protein is Ribosomal RNA large subunit methyltransferase G.